Reading from the N-terminus, the 295-residue chain is MEKLQFQGGDRAVDEYAEYRRIVGDDDGGKLFTPEEYEQYKKTVLPMRLQNRLYVSWRSPCGMDCKLVGPETACFCTHRYKQHKTDFKELPKERPVLLPCKVSKCPCKSFHYIPLNGSRPIRCRCKHFADEHSLAGTYHCTKCTKCSGFHSSFTCGCGQPAYAHDTIVETKEERLAQGKPVGHDVPYASMGGLTGFSSLAEGYMRLDASGTGAPGASFLESSQSGASHPFLKMYDMPCTVQGVSEPPGIDKQVSSMRLSEEDDMAYFERRYQERLRKEKEHKRQKNSKPPTTQRP.

The interval 244–295 (SEPPGIDKQVSSMRLSEEDDMAYFERRYQERLRKEKEHKRQKNSKPPTTQRP) is disordered. Positions 266–278 (YFERRYQERLRKE) are enriched in basic and acidic residues.

It belongs to the FAM221 family.

This chain is Protein FAM221A (fam221a), found in Xenopus laevis (African clawed frog).